We begin with the raw amino-acid sequence, 497 residues long: Glucose-6-phosphate isomerase (497 aa).

The active-site Proton donor is the Glu350. Residues His381 and Lys485 contribute to the active site.

It belongs to the GPI family.

It localises to the cytoplasm. It carries out the reaction alpha-D-glucose 6-phosphate = beta-D-fructose 6-phosphate. It participates in carbohydrate biosynthesis; gluconeogenesis. Its pathway is carbohydrate degradation; glycolysis; D-glyceraldehyde 3-phosphate and glycerone phosphate from D-glucose: step 2/4. Its function is as follows. Catalyzes the reversible isomerization of glucose-6-phosphate to fructose-6-phosphate. The chain is Glucose-6-phosphate isomerase from Legionella pneumophila.